The following is a 426-amino-acid chain: D-ribulose kinase (426 aa).

Substrate-binding positions include D8, 12 to 15 (SGAR), S72, and D221. ATP is bound by residues S243, G281, and 376–380 (GGAKN).

The protein belongs to the FGGY kinase family. The cofactor is a divalent metal cation.

The enzyme catalyses D-ribulose + ATP = D-ribulose 5-phosphate + ADP + H(+). Functionally, exhibits ATP hydrolysis without substrate. Phosphorylates D-ribulose. In Synechococcus elongatus (strain ATCC 33912 / PCC 7942 / FACHB-805) (Anacystis nidulans R2), this protein is D-ribulose kinase.